We begin with the raw amino-acid sequence, 1414 residues long: MVHATACSEIIRAEVAELLGVRADALHPGANLVGQGLDSIRMMSLVGRWRRKGIAVDFATLAATPTIEAWSQLVSAGTGVAPTAVAAPGDAGLSQEGEPFPLAPMQHAMWVGRHDHQQLGGVAGHLYVEFDGARVDPDRLRAAATRLALRHPMLRVQFLPDGTQRIPPAAGSRDFPISVADLRHVAPDVVDQRLAGIRDAKSHQQLDGAVFELALTLLPGERTRLHVDLDMQAADAMSYRILLADLAALYDGREPPALGYTYREYRQAIEAEETLPQPVRDADRDWWAQRIPQLPDPPALPTRAGGERDRRRSTRRWHWLDPQTRDALFARARARGITPAMTLAAAFANVLARWSASSRFLLNLPLFSRQALHPDVDLLVGDFTSSLLLDVDLTGARTAAARAQAVQEALRSAAGHSAYPGLSVLRDLSRHRGTQVLAPVVFTSALGLGDLFCPDVTEQFGTPGWIISQGPQVLLDAQVTEFDGGVLVNWDVREGVFAPGVIDAMFTHQVDELLRLAAGDDAWDAPSPSALPAAQRAVRAALNGRTAAPSTEALHDGFFRQAQQQPDAPAVFASSGDLSYAQLRDQASAVAAALRAAGLRVGDTVAVLGPKTGEQVAAVLGILAAGGVYLPIGVDQPRDRAERILATGSVNLALVCGPPCQVRVPVPTLLLADVLAAAPAEFVPGPSDPTALAYVLFTSGSTGEPKGVEVAHDAAMNTVETFIRHFELGAADRWLALATLECDMSVLDIFAALRSGGAIVVVDEAQRRDPDAWARLIDTYEVTALNFMPGWLDMLLEVGGGRLSSLRAVAVGGDWVRPDLARRLQVQAPSARFAGLGGATETAVHATIFEVQDAANLPPDWASVPYGVPFPNNACRVVADSGDDCPDWVAGELWVSGRGIARGYRGRPELTAERFVEHDGRTWYRTGDLARYWHDGTLEFVGRADHRVKISGYRVELGEIEAALQRLPGVHAAAATVLPGGSDVLAAAVCVDDAGVTAESIRQQLADLVPAHMIPRHVTLLDRIPFTDSGKIDRAEVGALLAAEVERSGDRSAPYAAPRTVLQRALRRIVADILGRANDAVGVHDDFFALGGDSVLATQVVAGIRRWLDSPSLMVADMFAARTIAALAQLLTGREANADRLELVAEVYLEIANMTSADVMAALDPIEQPAQPAFKPWVKRFTGTDKPGAVLVFPHAGGAAAAYRWLAKSLVANDVDTFVVQYPQRADRRSHPAADSIEALALELFEAGDWHLTAPLTLFGHCMGAIVAFEFARLAERNGVPVRALWASSGQAPSTVAASGPLPTADRDVLADMVDLGGTDPVLLEDEEFVELLVPAVKADYRALSGYSCPPDVRIRANIHAVGGNRDHRISREMLTSWETHTSGRFTLSHFDGGHFYLNDHLDAVARMVSADVR.

Residues 5 to 78 (TACSEIIRAE…AWSQLVSAGT (74 aa)) enclose the Carrier 1 domain. Position 39 is an O-(pantetheine 4'-phosphoryl)serine (S39). Residues 96–394 (EGEPFPLAPM…SSLLLDVDLT (299 aa)) form a condensation/cyclization region. The interval 579–975 (SYAQLRDQAS…RLPGVHAAAA (397 aa)) is adenylation. Residues 1057 to 1135 (APRTVLQRAL…ALAQLLTGRE (79 aa)) form the Carrier 2 domain. S1094 carries the post-translational modification O-(pantetheine 4'-phosphoryl)serine. The interval 1188 to 1413 (GAVLVFPHAG…AVARMVSADV (226 aa)) is thioesterase.

This sequence belongs to the ATP-dependent AMP-binding enzyme family. MbtB subfamily. Requires pantetheine 4'-phosphate as cofactor. Post-translationally, 4'-phosphopantetheine is transferred from CoA to a specific serine in each of the two carrier protein domains, leading to their activation from apo to holo forms.

It functions in the pathway siderophore biosynthesis; mycobactin biosynthesis. In terms of biological role, involved in the initial steps of the mycobactin biosynthetic pathway. Putatively couples activated salicylic acid with serine or threonine and cyclizes this precursor to the hydroxyphenyloxazoline ring system present in this class of siderophores. Essential for growth in macrophages. The polypeptide is Phenyloxazoline synthase MbtB (mbtB) (Mycobacterium tuberculosis (strain ATCC 25618 / H37Rv)).